The chain runs to 805 residues: Transmembrane channel-like protein 6 (805 aa).

Residues 1 to 29 (MAQPLAFILDVPETPGDQGQGPSPYDESE) form a disordered region. Residues 1–209 (MAQPLAFILD…SCCGRLRYAC (209 aa)) are Lumenal-facing. T89 is modified (phosphothreonine). Position 94 is an omega-N-methylarginine (R94). N103 carries N-linked (GlcNAc...) asparagine glycosylation. T105 bears the Phosphothreonine mark. Residues 210 to 230 (VLALHSLGLALLSALQALMPW) traverse the membrane as a helical segment. Over 231-249 (RYALKRIGGQFGSSVLSYF) the chain is Cytoplasmic. A helical membrane pass occupies residues 250–270 (LFLKTLLAFNALLLLLLVAFI). Over 271 to 338 (MGPQVAFPPA…TPRVGGLPYN (68 aa)) the chain is Lumenal. Residue N312 is glycosylated (N-linked (GlcNAc...) asparagine). Residues 339 to 359 (MPLAYLSTVGVSFFITCITLV) form a helical membrane-spanning segment. The Cytoplasmic segment spans residues 360 to 431 (YSMAHSFGES…RSVCGRLRQA (72 aa)). Residues 432 to 452 (AVLGLVWLLCLGTALGCAVAV) form a helical membrane-spanning segment. At 453-469 (HVFSEFMIQSPEAAGQE) the chain is on the lumenal side. A helical transmembrane segment spans residues 470–490 (AVLLVLPLVVGLLNLGAPYLC). Over 491–505 (RVLAALEPHDSPVLE) the chain is Cytoplasmic. Residues 506-526 (VYVAICRNLILKLAILGTLCY) form a helical membrane-spanning segment. Residues 527 to 553 (HWLGRRVGVLQGQCWEDFVGQELYRFL) lie on the Lumenal side of the membrane. A helical membrane pass occupies residues 554 to 574 (VMDFVLMLLDTLFGELVWRII). The Cytoplasmic portion of the chain corresponds to 575-604 (SEKKLKRRRKPEFDIARNVLELIYGQTLTW). A helical transmembrane segment spans residues 605-625 (LGVLFSPLLPAVQIIKLLLVF). Topologically, residues 626–650 (YVKKTSLLANCQAPRRPWLASHMST) are lumenal. The helical transmembrane segment at 651 to 671 (VFLTLLCFPAFLGAAVFLCYA) threads the bilayer. Over 672–722 (VWQVKPSSTCGPFRTLDTMYEAGRVWVRHLEAAGPRVSWLPWVHRYLMENT) the chain is Cytoplasmic. The chain crosses the membrane as a helical span at residues 723–743 (FFVFLVSALLLAVIYLNIQVV). The Lumenal portion of the chain corresponds to 744-805 (RGQRKVICLL…PALLTDEQDA (62 aa)). The tract at residues 778–805 (KEREERSRVGTTEEAAAPPALLTDEQDA) is disordered.

It belongs to the TMC family. As to quaternary structure, interacts with TMC8. Interacts and forms a complex with TMC8 and CIB1; the interaction stabilizes each component of the complex. Interacts and forms a complex with TMC8 and SLC30A1/ZNT1; the interaction regulates zinc transport into the ER. (Microbial infection) Interacts with human papillomavirus 16/HPV16 protein E5; the interaction alleviates TMC6-mediated transcription factors inhibition. Expressed in placenta, prostate, testis, activated T-lymphocytes and lymphokine-activated killer (LAK) lymphocytes.

Its subcellular location is the endoplasmic reticulum membrane. It localises to the golgi apparatus membrane. It is found in the nucleus membrane. Acts as a regulatory protein involved in the regulation of numerous cellular processes. Together with its homolog TMC8/EVER2, forms a complex with CIB1 in lymphocytes and keratynocytes where TMC6 and TMC8 stabilize CIB1 and reciprocally. Together with TMC8, also forms a complex with and activates zinc transporter ZNT1 at the ER membrane of keratynocytes, thereby facilitating zinc uptake into the ER. Down-regulates the activity of transcription factors induced by zinc and cytokines. Also plays a role in thermal sensation by inhibiting the M-channel (KCNQ2-KCNQ3 channel) current in primary sensory neurons. In Homo sapiens (Human), this protein is Transmembrane channel-like protein 6.